We begin with the raw amino-acid sequence, 459 residues long: tRNA modification GTPase MnmE (459 aa).

3 residues coordinate (6S)-5-formyl-5,6,7,8-tetrahydrofolate: Arg-30, Glu-93, and Lys-132. Residues 226–381 form the TrmE-type G domain; sequence GVTMAIVGKP…LEEKILESVK (156 aa). Asn-236 serves as a coordination point for K(+). Residues 236 to 241, 255 to 261, and 280 to 283 each bind GTP; these read NVGKST, TDIPGTT, and DTAG. Ser-240 provides a ligand contact to Mg(2+). The K(+) site is built by Thr-255, Ile-257, and Thr-260. Thr-261 is a Mg(2+) binding site. Lys-459 provides a ligand contact to (6S)-5-formyl-5,6,7,8-tetrahydrofolate.

The protein belongs to the TRAFAC class TrmE-Era-EngA-EngB-Septin-like GTPase superfamily. TrmE GTPase family. In terms of assembly, homodimer. Heterotetramer of two MnmE and two MnmG subunits. It depends on K(+) as a cofactor.

It localises to the cytoplasm. In terms of biological role, exhibits a very high intrinsic GTPase hydrolysis rate. Involved in the addition of a carboxymethylaminomethyl (cmnm) group at the wobble position (U34) of certain tRNAs, forming tRNA-cmnm(5)s(2)U34. This chain is tRNA modification GTPase MnmE, found in Fervidobacterium nodosum (strain ATCC 35602 / DSM 5306 / Rt17-B1).